Here is a 127-residue protein sequence, read N- to C-terminus: Aspartate 1-decarboxylase (127 aa).

S25 functions as the Schiff-base intermediate with substrate; via pyruvic acid in the catalytic mechanism. Pyruvic acid (Ser) is present on S25. T57 contributes to the substrate binding site. Y58 serves as the catalytic Proton donor. A substrate-binding site is contributed by G73–A75.

Belongs to the PanD family. Heterooctamer of four alpha and four beta subunits. It depends on pyruvate as a cofactor. In terms of processing, is synthesized initially as an inactive proenzyme, which is activated by self-cleavage at a specific serine bond to produce a beta-subunit with a hydroxyl group at its C-terminus and an alpha-subunit with a pyruvoyl group at its N-terminus.

The protein resides in the cytoplasm. The enzyme catalyses L-aspartate + H(+) = beta-alanine + CO2. It functions in the pathway cofactor biosynthesis; (R)-pantothenate biosynthesis; beta-alanine from L-aspartate: step 1/1. Its function is as follows. Catalyzes the pyruvoyl-dependent decarboxylation of aspartate to produce beta-alanine. In Listeria monocytogenes serotype 4b (strain F2365), this protein is Aspartate 1-decarboxylase.